Here is a 224-residue protein sequence, read N- to C-terminus: Cytochrome c biogenesis ATP-binding export protein CcmA (224 aa).

One can recognise an ABC transporter domain in the interval 1–220 (MQNAEAAPAL…EYAHAEVVGA (220 aa)). 40–47 (GANGSGKT) serves as a coordination point for ATP.

This sequence belongs to the ABC transporter superfamily. CcmA exporter (TC 3.A.1.107) family. As to quaternary structure, the complex is composed of two ATP-binding proteins (CcmA) and two transmembrane proteins (CcmB).

Its subcellular location is the cell inner membrane. It catalyses the reaction heme b(in) + ATP + H2O = heme b(out) + ADP + phosphate + H(+). Functionally, part of the ABC transporter complex CcmAB involved in the biogenesis of c-type cytochromes; once thought to export heme, this seems not to be the case, but its exact role is uncertain. Responsible for energy coupling to the transport system. In Bordetella parapertussis (strain 12822 / ATCC BAA-587 / NCTC 13253), this protein is Cytochrome c biogenesis ATP-binding export protein CcmA.